Reading from the N-terminus, the 399-residue chain is Phosphoprotein (399 aa).

Polar residues-rich tracts occupy residues 30–46 and 82–112; these read ATSQSSLNKPPSQSSRT and GRQNLDSLSMISNKPQTGTLLMGSDTQLPSP. Positions 30 to 112 are disordered; it reads ATSQSSLNKP…MGSDTQLPSP (83 aa). Positions 224 to 287 are multimerization; sequence NYASEILDAI…ITTMKIMDPG (64 aa). Residues 226–253 are a coiled coil; sequence ASEILDAIKALEVRLDRIEGKVDKIMLT.

This sequence belongs to the rubulavirus/avulavirus P protein family. In terms of assembly, homotetramer. Interacts (via multimerization domain) with polymerase L; this interaction forms the polymerase L-P complex. Interacts (via N-terminus) with N0 (via Ncore); this interaction allows P to chaperon N0 to avoid N polymerization before encapsidation. Interacts (via C-terminus) with N-RNA template; this interaction positions the polymerase on the template for both transcription and replication.

Functionally, essential cofactor of the RNA polymerase L that plays a central role in the transcription and replication by forming the polymerase complex with RNA polymerase L and recruiting L to the genomic N-RNA template for RNA synthesis. Also plays a central role in the encapsidation of nascent RNA chains by forming the encapsidation complex with the nucleocapsid protein N (N-P complex). Acts as a chaperone for newly synthesized free N protein, so-called N0, allowing encapsidation of nascent RNA chains during replication. The nucleoprotein protein N prevents excessive phosphorylation of P, which leads to down-regulation of viral transcription/ replication. Participates, together with N, in the formation of viral factories (viroplasms), which are large inclusions in the host cytoplasm where replication takes place. This chain is Phosphoprotein (P/V), found in Human parainfluenza 4a virus (strain Toshiba) (HPIV-4a).